We begin with the raw amino-acid sequence, 373 residues long: tRNA-specific 2-thiouridylase MnmA (373 aa).

ATP is bound by residues 7–14 and leucine 33; that span reads AMSGGVDS. Cysteine 101 functions as the Nucleophile in the catalytic mechanism. An intrachain disulfide couples cysteine 101 to cysteine 215. An ATP-binding site is contributed by glycine 125. Residues 165 to 167 are interaction with tRNA; it reads KDQ. Cysteine 215 acts as the Cysteine persulfide intermediate in catalysis.

It belongs to the MnmA/TRMU family.

It localises to the cytoplasm. It carries out the reaction S-sulfanyl-L-cysteinyl-[protein] + uridine(34) in tRNA + AH2 + ATP = 2-thiouridine(34) in tRNA + L-cysteinyl-[protein] + A + AMP + diphosphate + H(+). Catalyzes the 2-thiolation of uridine at the wobble position (U34) of tRNA, leading to the formation of s(2)U34. This is tRNA-specific 2-thiouridylase MnmA from Roseiflexus sp. (strain RS-1).